Reading from the N-terminus, the 137-residue chain is uncharacterized protein (137 aa).

The region spanning 4–118 is the CENP-V/GFA domain; it reads YEGNCLCKAI…CIDDKPDCYD (115 aa). Zn(2+) contacts are provided by C8, C10, C27, C29, C32, C71, and C74.

Belongs to the Gfa family. It depends on Zn(2+) as a cofactor.

The protein localises to the cytoplasm. The protein resides in the nucleus. This is an uncharacterized protein from Schizosaccharomyces pombe (strain 972 / ATCC 24843) (Fission yeast).